We begin with the raw amino-acid sequence, 237 residues long: Oligoribonuclease, mitochondrial (237 aa).

The N-terminal 25 residues, M1–G25, are a transit peptide targeting the mitochondrion. In terms of domain architecture, Exonuclease spans M43–L207. Positions 47 and 49 each coordinate Mg(2+). At S92 the chain carries Phosphoserine. Y122 is subject to Phosphotyrosine. Position 147 (D147) interacts with Mg(2+). Position 173 is an N6-acetyllysine (K173). H194 is a catalytic residue. D199 is a binding site for Mg(2+).

It belongs to the oligoribonuclease family. As to quaternary structure, homodimer. Homotetramer. It depends on Mn(2+) as a cofactor. Mg(2+) is required as a cofactor.

The protein resides in the mitochondrion intermembrane space. The protein localises to the mitochondrion matrix. It is found in the mitochondrion. It localises to the cytoplasm. Its subcellular location is the nucleus. In terms of biological role, 3'-to-5'exoribonuclease that preferentially degrades DNA and RNA oligonucleotides composed of only two nucleotides. Binds and degrades longer oligonucleotides with a lower affinity. Plays dual roles in mitochondria, scavenging nanoRNAs (small RNA oligonucleotides of &lt;5 nucleotides) that are produced by the degradosome and clearing short RNAs that are generated by RNA processing. Essential for correct initiation of mitochondrial transcription, degrading mitochondrial RNA dinucleotides to prevent RNA-primed transcription at non-canonical sites in the mitochondrial genome. Essential for embryonic development. In Bos taurus (Bovine), this protein is Oligoribonuclease, mitochondrial (REXO2).